A 95-amino-acid polypeptide reads, in one-letter code: Aspartyl/glutamyl-tRNA(Asn/Gln) amidotransferase subunit C (95 aa).

Belongs to the GatC family. As to quaternary structure, heterotrimer of A, B and C subunits.

It carries out the reaction L-glutamyl-tRNA(Gln) + L-glutamine + ATP + H2O = L-glutaminyl-tRNA(Gln) + L-glutamate + ADP + phosphate + H(+). The enzyme catalyses L-aspartyl-tRNA(Asn) + L-glutamine + ATP + H2O = L-asparaginyl-tRNA(Asn) + L-glutamate + ADP + phosphate + 2 H(+). Functionally, allows the formation of correctly charged Asn-tRNA(Asn) or Gln-tRNA(Gln) through the transamidation of misacylated Asp-tRNA(Asn) or Glu-tRNA(Gln) in organisms which lack either or both of asparaginyl-tRNA or glutaminyl-tRNA synthetases. The reaction takes place in the presence of glutamine and ATP through an activated phospho-Asp-tRNA(Asn) or phospho-Glu-tRNA(Gln). The sequence is that of Aspartyl/glutamyl-tRNA(Asn/Gln) amidotransferase subunit C from Ectopseudomonas mendocina (strain ymp) (Pseudomonas mendocina).